Here is a 173-residue protein sequence, read N- to C-terminus: Large ribosomal subunit protein bL12m (173 aa).

The transit peptide at 1–33 (MFRIASRQTRNLRALSSSKNWARSLVNTRSFRA) directs the protein to the mitochondrion.

The protein belongs to the bacterial ribosomal protein bL12 family. As to quaternary structure, component of the mitochondrial large ribosomal subunit (mt-LSU). Mature yeast 74S mitochondrial ribosomes consist of a small (37S) and a large (54S) subunit. The 37S small subunit contains a 15S ribosomal RNA (15S mt-rRNA) and at least 32 different proteins. The 54S large subunit contains a 21S rRNA (21S mt-rRNA) and at least 45 different proteins.

It localises to the mitochondrion. Its function is as follows. Component of the mitochondrial ribosome (mitoribosome), a dedicated translation machinery responsible for the synthesis of mitochondrial genome-encoded proteins, including at least some of the essential transmembrane subunits of the mitochondrial respiratory chain. The mitoribosomes are attached to the mitochondrial inner membrane and translation products are cotranslationally integrated into the membrane. The chain is Large ribosomal subunit protein bL12m (mrpl12) from Schizosaccharomyces pombe (strain 972 / ATCC 24843) (Fission yeast).